The primary structure comprises 195 residues: MGGKQSSASRSRAPFPGVSSDDSAVPPSSNFGHFRAGGAMGLRSRSVSSVSGLDPPAPGLPFGLYRAGPDTERGGSSGSEDSRGDLYLGSRASLADTLQIAPRWIGAHSGFRCPICSKSVAPDEMEMHFIMCLSKPRLSYNDDVLTRDAGECVICLEELSQGDTIARLPCLCIYHKSCIDSWFEVNRCCPEHPSD.

Residues Met1 to Arg10 show a composition bias toward polar residues. Disordered regions lie at residues Met1–Ala36 and Pro61–Gly84. Gly2 carries the N-myristoyl glycine lipid modification. Residues Val18–Ser29 show a composition bias toward low complexity. The RING-type; atypical zinc-finger motif lies at Cys152 to Pro193.

The protein localises to the endosome. It localises to the lysosome. It is found in the membrane. The enzyme catalyses S-ubiquitinyl-[E2 ubiquitin-conjugating enzyme]-L-cysteine + [acceptor protein]-L-lysine = [E2 ubiquitin-conjugating enzyme]-L-cysteine + N(6)-ubiquitinyl-[acceptor protein]-L-lysine.. The protein operates within protein modification; protein ubiquitination. E3 ubiquitin-protein ligase that plays a role in neuron cells differentiation. Plays a role in the establishment and maintenance of neuronal transmission and plasticity. This Xenopus tropicalis (Western clawed frog) protein is E3 ubiquitin-protein ligase ZNRF1 (znrf1).